We begin with the raw amino-acid sequence, 258 residues long: MSFHDLHHQGVPFVLPNAWDVPSALAYLAEGFTAIGTTSFGVSSSGGHPDGHRATRGANIALAAALAPLQCYVSVDIEDGYSDEPDAIADYVAQLSTAGINIEDSSAEKLIDPALAAAKIVAIKQRNPEVFVNARVDTYWLRQHADTTSTIQRALRYVDAGADGVFVPLANDPDELAELTRNIPCPVNTLPVPGLTIADLGELGVARVSTGSVPYSAGLYAAAHAARAVSDGEQLPRSVPYAELQARLVDYENRTSTT.

This is an uncharacterized protein from Mycobacterium tuberculosis (strain CDC 1551 / Oshkosh).